The sequence spans 335 residues: Anthranilate phosphoribosyltransferase (335 aa).

5-phospho-alpha-D-ribose 1-diphosphate is bound by residues glycine 79, glycine 82–aspartate 83, serine 87, asparagine 89–threonine 92, lysine 107–serine 115, and serine 119. Glycine 79 lines the anthranilate pocket. Serine 91 contacts Mg(2+). Asparagine 110 provides a ligand contact to anthranilate. Position 165 (arginine 165) interacts with anthranilate. Aspartate 224 and glutamate 225 together coordinate Mg(2+).

Belongs to the anthranilate phosphoribosyltransferase family. As to quaternary structure, homodimer. Mg(2+) is required as a cofactor.

The catalysed reaction is N-(5-phospho-beta-D-ribosyl)anthranilate + diphosphate = 5-phospho-alpha-D-ribose 1-diphosphate + anthranilate. The protein operates within amino-acid biosynthesis; L-tryptophan biosynthesis; L-tryptophan from chorismate: step 2/5. Functionally, catalyzes the transfer of the phosphoribosyl group of 5-phosphorylribose-1-pyrophosphate (PRPP) to anthranilate to yield N-(5'-phosphoribosyl)-anthranilate (PRA). This is Anthranilate phosphoribosyltransferase from Streptococcus mutans serotype c (strain ATCC 700610 / UA159).